The sequence spans 676 residues: DNA ligase (676 aa).

NAD(+)-binding positions include 35 to 39, 84 to 85, and E115; these read DAVYD and SL. Catalysis depends on K117, which acts as the N6-AMP-lysine intermediate. NAD(+) contacts are provided by R138, E177, K296, and K320. C414, C417, C432, and C437 together coordinate Zn(2+). The BRCT domain maps to 599–676; that stretch reads NANLKLVGKT…SEAELLKILA (78 aa).

The protein belongs to the NAD-dependent DNA ligase family. LigA subfamily. Mg(2+) serves as cofactor. The cofactor is Mn(2+).

It carries out the reaction NAD(+) + (deoxyribonucleotide)n-3'-hydroxyl + 5'-phospho-(deoxyribonucleotide)m = (deoxyribonucleotide)n+m + AMP + beta-nicotinamide D-nucleotide.. In terms of biological role, DNA ligase that catalyzes the formation of phosphodiester linkages between 5'-phosphoryl and 3'-hydroxyl groups in double-stranded DNA using NAD as a coenzyme and as the energy source for the reaction. It is essential for DNA replication and repair of damaged DNA. The polypeptide is DNA ligase (Trichormus variabilis (strain ATCC 29413 / PCC 7937) (Anabaena variabilis)).